Consider the following 368-residue polypeptide: MHSYQLLGLAAVGSLVSAAPAPSRVSEFAKKASTCTFTSASEASESISSCSDVVLSSIEVPAGETLDLSDAADGSTITFEGTTSFGYKEWKGPLIRFGGKDLTVTMADGAVIDGDGSRWWDSKGTNGGKTKPKFMYIHDVEDSTFKGINIKNTPVQAISVQATNVHLNDFTIDNSDGDDNGGHNTDGFDISESTGVYISGATVKNQDDCIAINSGESISFTGGTCSGGHGLSIGSVGGRDDNTVKNVTISDSTVSNSANGVRIKTIYKETGDVSEITYSNIQLSGITDYGIVIEQDYENGSPTGTPSTGIPITDVTVDGVTGTLEDDATQVYILCGDGSCSDWTWSGVDLSGGKTSDKCENVPSGASC.

The first 18 residues, 1–18 (MHSYQLLGLAAVGSLVSA), serve as a signal peptide directing secretion. A propeptide spanning residues 19–31 (APAPSRVSEFAKK) is cleaved from the precursor. Residues Cys-35 and Cys-50 are joined by a disulfide bond. PbH1 repeat units follow at residues 140-161 (VEDSTFKGINIKNTPVQAISVQ), 162-192 (ATNVHLNDFTIDNSDGDDNGGHNTDGFDISE), and 193-214 (STGVYISGATVKNQDDCIAINS). Catalysis depends on Asp-207, which acts as the Proton donor. Residues Cys-209 and Cys-225 are joined by a disulfide bond. Residue His-229 is part of the active site. 3 PbH1 repeats span residues 244–265 (VKNVTISDSTVSNSANGVRIKT), 273–295 (VSEITYSNIQLSGITDYGIVIEQ), and 307–352 (STGI…DLSG). Asn-246 carries an N-linked (GlcNAc...) asparagine glycan. 2 disulfides stabilise this stretch: Cys-335–Cys-340 and Cys-359–Cys-368.

Belongs to the glycosyl hydrolase 28 family.

The protein localises to the secreted. The enzyme catalyses (1,4-alpha-D-galacturonosyl)n+m + H2O = (1,4-alpha-D-galacturonosyl)n + (1,4-alpha-D-galacturonosyl)m.. Its function is as follows. Involved in maceration and soft-rotting of plant tissue. Hydrolyzes the 1,4-alpha glycosidic bonds of de-esterified pectate in the smooth region of the plant cell wall. The sequence is that of Probable endopolygalacturonase I (pgaI) from Aspergillus niger (strain ATCC MYA-4892 / CBS 513.88 / FGSC A1513).